The chain runs to 560 residues: 2-succinyl-5-enolpyruvyl-6-hydroxy-3-cyclohexene-1-carboxylate synthase (560 aa).

This sequence belongs to the TPP enzyme family. MenD subfamily. As to quaternary structure, homodimer. Mg(2+) is required as a cofactor. Requires Mn(2+) as cofactor. It depends on thiamine diphosphate as a cofactor.

It carries out the reaction isochorismate + 2-oxoglutarate + H(+) = 5-enolpyruvoyl-6-hydroxy-2-succinyl-cyclohex-3-ene-1-carboxylate + CO2. It functions in the pathway quinol/quinone metabolism; 1,4-dihydroxy-2-naphthoate biosynthesis; 1,4-dihydroxy-2-naphthoate from chorismate: step 2/7. Its pathway is quinol/quinone metabolism; menaquinone biosynthesis. Catalyzes the thiamine diphosphate-dependent decarboxylation of 2-oxoglutarate and the subsequent addition of the resulting succinic semialdehyde-thiamine pyrophosphate anion to isochorismate to yield 2-succinyl-5-enolpyruvyl-6-hydroxy-3-cyclohexene-1-carboxylate (SEPHCHC). The chain is 2-succinyl-5-enolpyruvyl-6-hydroxy-3-cyclohexene-1-carboxylate synthase from Staphylococcus saprophyticus subsp. saprophyticus (strain ATCC 15305 / DSM 20229 / NCIMB 8711 / NCTC 7292 / S-41).